A 57-amino-acid chain; its full sequence is UPF0391 membrane protein RPA3029 (57 aa).

The next 2 membrane-spanning stretches (helical) occupy residues 6–26 (WALI…TGIS) and 35–55 (ILFY…FTIF).

The protein belongs to the UPF0391 family.

It is found in the cell membrane. This is UPF0391 membrane protein RPA3029 from Rhodopseudomonas palustris (strain ATCC BAA-98 / CGA009).